Here is a 24-residue protein sequence, read N- to C-terminus: Erythromycin resistance leader peptide (24 aa).

Residues 1–14 (MSMGIAARPPRAAL) show a composition bias toward low complexity. The disordered stretch occupies residues 1–24 (MSMGIAARPPRAALLPPPSVPRSR). The segment covering 15–24 (LPPPSVPRSR) has biased composition (pro residues).

In terms of biological role, this peptide is involved in the control mechanism of the synthesis of the macrolide-lincosamide-streptogramin B resistance protein. This chain is Erythromycin resistance leader peptide, found in Streptomyces fradiae (Streptomyces roseoflavus).